The following is a 441-amino-acid chain: Ribulose bisphosphate carboxylase large chain (441 aa).

Lysine 5 bears the N6,N6,N6-trimethyllysine mark. The substrate site is built by asparagine 114 and threonine 164. The active-site Proton acceptor is the lysine 166. Lysine 168 is a substrate binding site. Residues lysine 192, aspartate 194, and glutamate 195 each coordinate Mg(2+). Lysine 192 carries the N6-carboxylysine modification. Histidine 285 functions as the Proton acceptor in the catalytic mechanism. Residues arginine 286, histidine 318, and serine 370 each coordinate substrate.

Belongs to the RuBisCO large chain family. Type I subfamily. In terms of assembly, heterohexadecamer of 8 large chains and 8 small chains; disulfide-linked. The disulfide link is formed within the large subunit homodimers. Mg(2+) is required as a cofactor. In terms of processing, the disulfide bond which can form in the large chain dimeric partners within the hexadecamer appears to be associated with oxidative stress and protein turnover.

It is found in the plastid. The protein localises to the chloroplast. The enzyme catalyses 2 (2R)-3-phosphoglycerate + 2 H(+) = D-ribulose 1,5-bisphosphate + CO2 + H2O. The catalysed reaction is D-ribulose 1,5-bisphosphate + O2 = 2-phosphoglycolate + (2R)-3-phosphoglycerate + 2 H(+). RuBisCO catalyzes two reactions: the carboxylation of D-ribulose 1,5-bisphosphate, the primary event in carbon dioxide fixation, as well as the oxidative fragmentation of the pentose substrate in the photorespiration process. Both reactions occur simultaneously and in competition at the same active site. The sequence is that of Ribulose bisphosphate carboxylase large chain from Drosera petiolaris (Woolly sundew).